The sequence spans 390 residues: Probable tRNA pseudouridine synthase D (390 aa).

D93 acts as the Nucleophile in catalysis. The 188-residue stretch at 166 to 353 (HVLNYFGIQR…YGTRRKLITP (188 aa)) folds into the TRUD domain.

This sequence belongs to the pseudouridine synthase TruD family.

The enzyme catalyses uridine(13) in tRNA = pseudouridine(13) in tRNA. Functionally, could be responsible for synthesis of pseudouridine from uracil-13 in transfer RNAs. The sequence is that of Probable tRNA pseudouridine synthase D from Methanococcus vannielii (strain ATCC 35089 / DSM 1224 / JCM 13029 / OCM 148 / SB).